Reading from the N-terminus, the 105-residue chain is Prokineticin-1 (105 aa).

Positions 1 to 19 are cleaved as a signal peptide; the sequence is MRGAVQVFIMLLLATVSDC. 5 disulfide bridges follow: cysteine 26/cysteine 38, cysteine 32/cysteine 50, cysteine 37/cysteine 78, cysteine 60/cysteine 86, and cysteine 80/cysteine 96.

This sequence belongs to the AVIT (prokineticin) family.

It localises to the secreted. In terms of biological role, potently contracts gastrointestinal (GI) smooth muscle. Induces proliferation, migration and fenestration (the formation of membrane discontinuities) in capillary endothelial cells derived from endocrine glands. Has little or no effect on a variety of other endothelial and non-endothelial cell types. Induces proliferation and differentiation, but not migration, of enteric neural crest cells. Directly influences neuroblastoma progression by promoting the proliferation and migration of neuroblastoma cells. Positively regulates PTGS2 expression and prostaglandin synthesis. May play a role in placentation. May play a role in normal and pathological testis angiogenesis. In Rattus norvegicus (Rat), this protein is Prokineticin-1 (Prok1).